Here is a 510-residue protein sequence, read N- to C-terminus: Probable lysine--tRNA ligase, cytoplasmic (510 aa).

Belongs to the class-II aminoacyl-tRNA synthetase family. In terms of assembly, homodimer.

It is found in the cytoplasm. It carries out the reaction tRNA(Lys) + L-lysine + ATP = L-lysyl-tRNA(Lys) + AMP + diphosphate. This chain is Probable lysine--tRNA ligase, cytoplasmic, found in Encephalitozoon cuniculi (strain GB-M1) (Microsporidian parasite).